We begin with the raw amino-acid sequence, 255 residues long: Flagellar brake protein YcgR (255 aa).

A PilZ domain is found at 130 to 245 (QRREHFRVPL…MAAHLQRFVM (116 aa)).

This sequence belongs to the YcgR family. In terms of assembly, monomer. Interacts with the flagellar basal bodies.

The protein localises to the bacterial flagellum basal body. In terms of biological role, acts as a flagellar brake, regulating swimming and swarming in a bis-(3'-5') cyclic diguanylic acid (c-di-GMP)-dependent manner. Binds 1 c-di-GMP dimer per subunit. Increasing levels of c-di-GMP lead to decreased motility. In Thiobacillus denitrificans (strain ATCC 25259 / T1), this protein is Flagellar brake protein YcgR.